We begin with the raw amino-acid sequence, 984 residues long: Putative formate dehydrogenase SAB2186c (984 aa).

In terms of domain architecture, 2Fe-2S ferredoxin-type spans 3–79 (EHLVVTLDGK…PMTVNTVNND (77 aa)). Residues C37, C48, C51, and C63 each contribute to the [2Fe-2S] cluster site. The 41-residue stretch at 79–119 (DVKDAQKEALDRILEKHMLYCTVCDYNNGDCEIHNTMDAWG) folds into the 4Fe-4S His(Cys)3-ligated-type domain. [4Fe-4S] cluster-binding residues include H95, C99, C102, C109, C147, C150, C153, C157, C190, C193, C196, C200, C264, C267, C271, and C299. 4Fe-4S ferredoxin-type domains are found at residues 138 to 165 (PFYR…VNET) and 181 to 211 (NDVP…VNME). Residues 252–984 (MRKERIKKTK…YVFPGNQVDK (733 aa)) are formate dehydrogenase. Residues 257–313 (IKKTKTVCTYCGVGCSFEVWTKDREILKVQPSHDSPANKIATCVKGKFSWGHINSDQ) form the 4Fe-4S Mo/W bis-MGD-type domain.

The protein in the C-terminal section; belongs to the prokaryotic molybdopterin-containing oxidoreductase family. Requires [2Fe-2S] cluster as cofactor. It depends on [4Fe-4S] cluster as a cofactor. Mo-bis(molybdopterin guanine dinucleotide) is required as a cofactor.

The catalysed reaction is formate + NAD(+) = CO2 + NADH. This Staphylococcus aureus (strain bovine RF122 / ET3-1) protein is Putative formate dehydrogenase SAB2186c.